A 309-amino-acid polypeptide reads, in one-letter code: HPr kinase/phosphorylase (309 aa).

Active-site residues include His-138 and Lys-159. 153-160 (GKSGVGKS) is an ATP binding site. Ser-160 is a binding site for Mg(2+). The active-site Proton acceptor; for phosphorylation activity. Proton donor; for dephosphorylation activity is the Asp-177. The segment at 201–210 (LEIRGLGIIN) is important for the catalytic mechanism of both phosphorylation and dephosphorylation. Residue Glu-202 participates in Mg(2+) binding. The active site involves Arg-243. The tract at residues 264–269 (PVRPGR) is important for the catalytic mechanism of dephosphorylation.

The protein belongs to the HPrK/P family. In terms of assembly, homohexamer. Mg(2+) serves as cofactor.

The catalysed reaction is [HPr protein]-L-serine + ATP = [HPr protein]-O-phospho-L-serine + ADP + H(+). It carries out the reaction [HPr protein]-O-phospho-L-serine + phosphate + H(+) = [HPr protein]-L-serine + diphosphate. Catalyzes the ATP- as well as the pyrophosphate-dependent phosphorylation of a specific serine residue in HPr, a phosphocarrier protein of the phosphoenolpyruvate-dependent sugar phosphotransferase system (PTS). HprK/P also catalyzes the pyrophosphate-producing, inorganic phosphate-dependent dephosphorylation (phosphorolysis) of seryl-phosphorylated HPr (P-Ser-HPr). The two antagonistic activities of HprK/P are regulated by several intracellular metabolites, which change their concentration in response to the absence or presence of rapidly metabolisable carbon sources (glucose, fructose, etc.) in the growth medium. Also phosphorylates/dephosphorylates the HPr-like catabolite repression protein crh on a specific serine residue. Therefore, by controlling the phosphorylation state of HPr and crh, HPrK/P is a sensor enzyme that plays a major role in the regulation of carbon metabolism and sugar transport: it mediates carbon catabolite repression (CCR), and regulates PTS-catalyzed carbohydrate uptake and inducer exclusion. This chain is HPr kinase/phosphorylase, found in Geobacillus thermodenitrificans (strain NG80-2).